The following is a 252-amino-acid chain: Large ribosomal subunit protein uL4 (252 aa).

The protein belongs to the universal ribosomal protein uL4 family. As to quaternary structure, part of the 50S ribosomal subunit.

In terms of biological role, one of the primary rRNA binding proteins, this protein initially binds near the 5'-end of the 23S rRNA. It is important during the early stages of 50S assembly. It makes multiple contacts with different domains of the 23S rRNA in the assembled 50S subunit and ribosome. Functionally, forms part of the polypeptide exit tunnel. The protein is Large ribosomal subunit protein uL4 of Archaeoglobus fulgidus (strain ATCC 49558 / DSM 4304 / JCM 9628 / NBRC 100126 / VC-16).